The following is a 242-amino-acid chain: Peptidase E (242 aa).

Active-site charge relay system residues include Ser-123, Asp-138, and His-160.

This sequence belongs to the peptidase S51 family.

Its subcellular location is the cytoplasm. It carries out the reaction Dipeptidase E catalyzes the hydrolysis of dipeptides Asp-|-Xaa. It does not act on peptides with N-terminal Glu, Asn or Gln, nor does it cleave isoaspartyl peptides.. Its function is as follows. Hydrolyzes dipeptides containing N-terminal aspartate residues. May play a role in allowing the cell to use peptide aspartate to spare carbon otherwise required for the synthesis of the aspartate family of amino acids. The polypeptide is Peptidase E (Nostoc sp. (strain PCC 7120 / SAG 25.82 / UTEX 2576)).